We begin with the raw amino-acid sequence, 252 residues long: tRNA pseudouridine synthase A (252 aa).

Aspartate 52 functions as the Nucleophile in the catalytic mechanism. Tyrosine 111 provides a ligand contact to substrate.

Belongs to the tRNA pseudouridine synthase TruA family. In terms of assembly, homodimer.

The catalysed reaction is uridine(38/39/40) in tRNA = pseudouridine(38/39/40) in tRNA. Formation of pseudouridine at positions 38, 39 and 40 in the anticodon stem and loop of transfer RNAs. This chain is tRNA pseudouridine synthase A, found in Parabacteroides distasonis (strain ATCC 8503 / DSM 20701 / CIP 104284 / JCM 5825 / NCTC 11152).